The sequence spans 119 residues: Holo-[acyl-carrier-protein] synthase (119 aa).

Aspartate 8 and glutamate 58 together coordinate Mg(2+).

This sequence belongs to the P-Pant transferase superfamily. AcpS family. It depends on Mg(2+) as a cofactor.

The protein resides in the cytoplasm. The enzyme catalyses apo-[ACP] + CoA = holo-[ACP] + adenosine 3',5'-bisphosphate + H(+). Its function is as follows. Transfers the 4'-phosphopantetheine moiety from coenzyme A to a Ser of acyl-carrier-protein. In Limosilactobacillus fermentum (strain NBRC 3956 / LMG 18251) (Lactobacillus fermentum), this protein is Holo-[acyl-carrier-protein] synthase.